We begin with the raw amino-acid sequence, 1056 residues long: Carbamoyl phosphate synthase large chain (1056 aa).

The interval 1-398 (MPRDPSIKKV…AFLKALRSLD (398 aa)) is carboxyphosphate synthetic domain. The ATP site is built by Arg-127, Arg-167, Gly-173, Gly-174, Glu-206, Val-208, Glu-213, Gly-239, Val-240, His-241, Gln-282, and Glu-295. Residues 131–324 (RDLMNRIGEP…IARVASKIAI (194 aa)) form the ATP-grasp 1 domain. The Mg(2+) site is built by Gln-282, Glu-295, and Asn-297. The Mn(2+) site is built by Gln-282, Glu-295, and Asn-297. An oligomerization domain region spans residues 399–532 (TDVEHHTVLS…STYGDKVCEV (134 aa)). Positions 533–921 (THSDRKKVMI…YKASIAAHNR (389 aa)) are carbamoyl phosphate synthetic domain. One can recognise an ATP-grasp 2 domain in the interval 663-854 (SVLLDSLSIP…LAKIAARVMM (192 aa)). 10 residues coordinate ATP: Arg-699, Arg-738, Leu-740, Glu-745, Gly-770, Val-771, His-772, Ser-773, Gln-813, and Glu-825. Mg(2+) is bound by residues Gln-813, Glu-825, and Asn-827. Residues Gln-813, Glu-825, and Asn-827 each coordinate Mn(2+). Residues 920–1056 (NRLPKSGNVF…IEPLQHYIGR (137 aa)) enclose the MGS-like domain. The segment at 922-1056 (LPKSGNVFIS…IEPLQHYIGR (135 aa)) is allosteric domain.

The protein belongs to the CarB family. As to quaternary structure, composed of two chains; the small (or glutamine) chain promotes the hydrolysis of glutamine to ammonia, which is used by the large (or ammonia) chain to synthesize carbamoyl phosphate. Tetramer of heterodimers (alpha,beta)4. The cofactor is Mg(2+). Requires Mn(2+) as cofactor.

The enzyme catalyses hydrogencarbonate + L-glutamine + 2 ATP + H2O = carbamoyl phosphate + L-glutamate + 2 ADP + phosphate + 2 H(+). The catalysed reaction is hydrogencarbonate + NH4(+) + 2 ATP = carbamoyl phosphate + 2 ADP + phosphate + 2 H(+). It functions in the pathway amino-acid biosynthesis; L-arginine biosynthesis; carbamoyl phosphate from bicarbonate: step 1/1. It participates in pyrimidine metabolism; UMP biosynthesis via de novo pathway; (S)-dihydroorotate from bicarbonate: step 1/3. Its function is as follows. Large subunit of the glutamine-dependent carbamoyl phosphate synthetase (CPSase). CPSase catalyzes the formation of carbamoyl phosphate from the ammonia moiety of glutamine, carbonate, and phosphate donated by ATP, constituting the first step of 2 biosynthetic pathways, one leading to arginine and/or urea and the other to pyrimidine nucleotides. The large subunit (synthetase) binds the substrates ammonia (free or transferred from glutamine from the small subunit), hydrogencarbonate and ATP and carries out an ATP-coupled ligase reaction, activating hydrogencarbonate by forming carboxy phosphate which reacts with ammonia to form carbamoyl phosphate. This Methanospirillum hungatei JF-1 (strain ATCC 27890 / DSM 864 / NBRC 100397 / JF-1) protein is Carbamoyl phosphate synthase large chain.